Consider the following 201-residue polypeptide: Glycolipid transfer protein (201 aa).

The interval 28-168 (IATTQFLEAC…KDFYAKLGDD (141 aa)) is glycolipid transfer protein homology domain.

Its function is as follows. Cargo transport protein that plays a key role in transport and secretion of liamocins, glycolipids (also called heavy oils) composed of a single mannitol or arabitol headgroup linked to either three, four or even six 3,5-dihydroxydecanoic ester tail-groups. This chain is Glycolipid transfer protein, found in Aureobasidium melanogenum (Aureobasidium pullulans var. melanogenum).